A 393-amino-acid chain; its full sequence is NAD(P)H-quinone oxidoreductase subunit H, chloroplastic (393 aa).

Belongs to the complex I 49 kDa subunit family. NDH is composed of at least 16 different subunits, 5 of which are encoded in the nucleus.

Its subcellular location is the plastid. It is found in the chloroplast thylakoid membrane. The catalysed reaction is a plastoquinone + NADH + (n+1) H(+)(in) = a plastoquinol + NAD(+) + n H(+)(out). It catalyses the reaction a plastoquinone + NADPH + (n+1) H(+)(in) = a plastoquinol + NADP(+) + n H(+)(out). In terms of biological role, NDH shuttles electrons from NAD(P)H:plastoquinone, via FMN and iron-sulfur (Fe-S) centers, to quinones in the photosynthetic chain and possibly in a chloroplast respiratory chain. The immediate electron acceptor for the enzyme in this species is believed to be plastoquinone. Couples the redox reaction to proton translocation, and thus conserves the redox energy in a proton gradient. This chain is NAD(P)H-quinone oxidoreductase subunit H, chloroplastic, found in Piper cenocladum (Ant piper).